The sequence spans 171 residues: ATP synthase subunit b (171 aa).

Residues 2 to 22 (FLVKMVLGFLIFLSPLCATGL) traverse the membrane as a helical segment.

It belongs to the ATPase B chain family. As to quaternary structure, F-type ATPases have 2 components, F(1) - the catalytic core - and F(0) - the membrane proton channel. F(1) has five subunits: alpha(3), beta(3), gamma(1), delta(1), epsilon(1). F(0) has three main subunits: a(1), b(2) and c(10-14). The alpha and beta chains form an alternating ring which encloses part of the gamma chain. F(1) is attached to F(0) by a central stalk formed by the gamma and epsilon chains, while a peripheral stalk is formed by the delta and b chains.

The protein resides in the cell inner membrane. Its function is as follows. F(1)F(0) ATP synthase produces ATP from ADP in the presence of a proton or sodium gradient. F-type ATPases consist of two structural domains, F(1) containing the extramembraneous catalytic core and F(0) containing the membrane proton channel, linked together by a central stalk and a peripheral stalk. During catalysis, ATP synthesis in the catalytic domain of F(1) is coupled via a rotary mechanism of the central stalk subunits to proton translocation. Functionally, component of the F(0) channel, it forms part of the peripheral stalk, linking F(1) to F(0). This is ATP synthase subunit b from Helicobacter pylori (strain Shi470).